A 329-amino-acid polypeptide reads, in one-letter code: Cytosolic arginine sensor for mTORC1 subunit 2 (329 aa).

2 consecutive ACT domains span residues 72-140 (ADAT…HTLS) and 262-322 (ELWK…SALK).

It belongs to the GATS family. In terms of assembly, forms homodimers and heterodimers with CASTOR1. Interacts with the GATOR2 complex which is composed of MIOS, SEC13, SEH1L, WDR24 and WDR59; the interaction is not regulated by arginine. Widely expressed.

The protein localises to the cytoplasm. Its subcellular location is the cytosol. Functions as a negative regulator of the TORC1 signaling pathway through the GATOR complex. As part of homodimers or heterodimers with CASTOR1, directly binds and inhibits the GATOR subcomplex GATOR2 and thereby mTORC1. Does not directly bind arginine, but binding of arginine to CASTOR1 disrupts the interaction of CASTOR2-containing heterodimers with GATOR2 which can in turn activate mTORC1 and the TORC1 signaling pathway. The sequence is that of Cytosolic arginine sensor for mTORC1 subunit 2 from Homo sapiens (Human).